The chain runs to 284 residues: Esterase alnB (284 aa).

Catalysis depends on charge relay system residues serine 93, aspartate 226, and histidine 255.

It belongs to the LovG family.

The protein operates within polyketide biosynthesis. Esterase; part of the gene cluster that mediates the biosynthesis of asperlin, a polyketide showing anti-inflammatory, antitumor and antibiotic activities. The first step of the asperlin biosynthesis is the production of the intermediate 2,4,6-octatrienoic acid by the highly redusing polyketide synthase alnA with cleavage of the PKS product by the esterase alnB. 2,4,6-octatrienoic acid is further converted to asperlin via several steps involving the remaining enzymes from the cluster. In Emericella nidulans (strain FGSC A4 / ATCC 38163 / CBS 112.46 / NRRL 194 / M139) (Aspergillus nidulans), this protein is Esterase alnB.